The sequence spans 427 residues: MATIEGIVAREILDSRGNPTVEVEVGLDDGTIARAAVPSGASTGAFEAVELRDGEKDRYLGKGVTQAVSNIEDKIVDELIGYEASEQRLIDQKMLDLDGTDNKSQLGANAILGVSLAVAKAAASAAELNLFRYLGGPNAHLLPVPMMNILNGGAHADSNVDIQEFMIAPIGAPTFREALRSGAEVYHALKSVLKKKDLATGLGDEGGFAPNLPTNAAALDLISEAVEKAGYRLGTDIVFALDVAATEFFENGTYTFEGVEKTAEEMSSYYTKLADAYPIVSIEDPLAEDDWSGWRTLTASVGDRIQIVGDDLFVTNPQRIARGIAENAANSVLVKVNQIGSLTETLDAVDLAHRAGFRCMMSHRSGETEDTTIADLAVATGCGQIKTGAPARSDRVAKYNQLLRIEEELADAARYAGSGAFPRYRSA.

Gln163 serves as a coordination point for (2R)-2-phosphoglycerate. Glu205 (proton donor) is an active-site residue. 3 residues coordinate Mg(2+): Asp242, Glu283, and Asp310. 4 residues coordinate (2R)-2-phosphoglycerate: Lys335, Arg364, Ser365, and Lys386. The Proton acceptor role is filled by Lys335.

The protein belongs to the enolase family. Mg(2+) is required as a cofactor.

The protein localises to the cytoplasm. Its subcellular location is the secreted. It localises to the cell surface. The catalysed reaction is (2R)-2-phosphoglycerate = phosphoenolpyruvate + H2O. It functions in the pathway carbohydrate degradation; glycolysis; pyruvate from D-glyceraldehyde 3-phosphate: step 4/5. In terms of biological role, catalyzes the reversible conversion of 2-phosphoglycerate (2-PG) into phosphoenolpyruvate (PEP). It is essential for the degradation of carbohydrates via glycolysis. In Salinispora tropica (strain ATCC BAA-916 / DSM 44818 / JCM 13857 / NBRC 105044 / CNB-440), this protein is Enolase.